Reading from the N-terminus, the 411-residue chain is Phosphoglycerate kinase (411 aa).

A disordered region spans residues 1–24 (MTGLCPLHQPSPLDHPHSGGTPMQ). Substrate-binding positions include 41–43 (DYN), R56, 79–82 (HFGR), R139, and R172. ATP is bound by residues K222, G310, E341, and 369–372 (GGDS).

This sequence belongs to the phosphoglycerate kinase family. Monomer.

It is found in the cytoplasm. The catalysed reaction is (2R)-3-phosphoglycerate + ATP = (2R)-3-phospho-glyceroyl phosphate + ADP. The protein operates within carbohydrate degradation; glycolysis; pyruvate from D-glyceraldehyde 3-phosphate: step 2/5. This is Phosphoglycerate kinase from Deinococcus radiodurans (strain ATCC 13939 / DSM 20539 / JCM 16871 / CCUG 27074 / LMG 4051 / NBRC 15346 / NCIMB 9279 / VKM B-1422 / R1).